The sequence spans 317 residues: uncharacterized protein (317 aa).

Residues 29–86 enclose the HTH lysR-type domain; the sequence is IDLNLLTIFEAVYVHKGIVNAAKVLNLTPSAISQSIQKLRVIFPDPLFIRKGQGVTPT. Residues 46-65 constitute a DNA-binding region (H-T-H motif); it reads IVNAAKVLNLTPSAISQSIQ.

Belongs to the LysR transcriptional regulatory family.

This is an uncharacterized protein from Escherichia coli (strain K12).